The primary structure comprises 508 residues: 2,3-bisphosphoglycerate-independent phosphoglycerate mutase (508 aa).

Mn(2+)-binding residues include D14 and S64. The active-site Phosphoserine intermediate is the S64. Residues H125, 155 to 156, R187, R193, 259 to 262, and K332 contribute to the substrate site; these read RD and RADR. Mn(2+) contacts are provided by D399, H403, D440, H441, and H459.

The protein belongs to the BPG-independent phosphoglycerate mutase family. Monomer. Requires Mn(2+) as cofactor.

The catalysed reaction is (2R)-2-phosphoglycerate = (2R)-3-phosphoglycerate. It participates in carbohydrate degradation; glycolysis; pyruvate from D-glyceraldehyde 3-phosphate: step 3/5. Functionally, catalyzes the interconversion of 2-phosphoglycerate and 3-phosphoglycerate. This chain is 2,3-bisphosphoglycerate-independent phosphoglycerate mutase, found in Pseudomonas fluorescens (strain Pf0-1).